We begin with the raw amino-acid sequence, 306 residues long: Phospho-N-acetylmuramoyl-pentapeptide-transferase (306 aa).

10 helical membrane-spanning segments follow: residues 1 to 21 (MDIY…IIFP), 49 to 69 (GTPT…GLIL), 75 to 95 (LIFT…VSIV), 104 to 124 (AWQK…TILQ), 130 to 150 (IFGI…LVSG), 160 to 180 (GIDG…MFFS), 182 to 202 (SSME…FLVY), 209 to 229 (VFMG…YALM), 234 to 254 (LSLL…ILQV), and 284 to 304 (IVGV…AFFL).

Belongs to the glycosyltransferase 4 family. MraY subfamily. The cofactor is Mg(2+).

It is found in the cell inner membrane. The catalysed reaction is UDP-N-acetyl-alpha-D-muramoyl-L-alanyl-gamma-D-glutamyl-meso-2,6-diaminopimeloyl-D-alanyl-D-alanine + di-trans,octa-cis-undecaprenyl phosphate = di-trans,octa-cis-undecaprenyl diphospho-N-acetyl-alpha-D-muramoyl-L-alanyl-D-glutamyl-meso-2,6-diaminopimeloyl-D-alanyl-D-alanine + UMP. Its pathway is cell wall biogenesis; peptidoglycan biosynthesis. Its function is as follows. Catalyzes the initial step of the lipid cycle reactions in the biosynthesis of the cell wall peptidoglycan: transfers peptidoglycan precursor phospho-MurNAc-pentapeptide from UDP-MurNAc-pentapeptide onto the lipid carrier undecaprenyl phosphate, yielding undecaprenyl-pyrophosphoryl-MurNAc-pentapeptide, known as lipid I. This is Phospho-N-acetylmuramoyl-pentapeptide-transferase from Fervidobacterium nodosum (strain ATCC 35602 / DSM 5306 / Rt17-B1).